The primary structure comprises 571 residues: Proline--tRNA ligase (571 aa).

The protein belongs to the class-II aminoacyl-tRNA synthetase family. ProS type 1 subfamily. In terms of assembly, homodimer.

The protein localises to the cytoplasm. The enzyme catalyses tRNA(Pro) + L-proline + ATP = L-prolyl-tRNA(Pro) + AMP + diphosphate. Its function is as follows. Catalyzes the attachment of proline to tRNA(Pro) in a two-step reaction: proline is first activated by ATP to form Pro-AMP and then transferred to the acceptor end of tRNA(Pro). As ProRS can inadvertently accommodate and process non-cognate amino acids such as alanine and cysteine, to avoid such errors it has two additional distinct editing activities against alanine. One activity is designated as 'pretransfer' editing and involves the tRNA(Pro)-independent hydrolysis of activated Ala-AMP. The other activity is designated 'posttransfer' editing and involves deacylation of mischarged Ala-tRNA(Pro). The misacylated Cys-tRNA(Pro) is not edited by ProRS. In Actinobacillus pleuropneumoniae serotype 3 (strain JL03), this protein is Proline--tRNA ligase.